A 131-amino-acid chain; its full sequence is Gem-associated protein 7 (131 aa).

The residue at position 1 (Met1) is an N-acetylmethionine. The 29-residue stretch at 1-29 folds into the SUZ-C domain; that stretch reads MQTPVNIPVPVLRLPRGPDGFSRGFAPDG. At Thr3 the chain carries Phosphothreonine. The 67-residue stretch at 65–131 folds into the Sm domain; it reads RYLRSLLAMV…SDIISYTFKP (67 aa).

The protein belongs to the gemin-7 family. Part of the core SMN complex that contains SMN1, GEMIN2/SIP1, DDX20/GEMIN3, GEMIN4, GEMIN5, GEMIN6, GEMIN7, GEMIN8 and STRAP/UNRIP. Part of the SMN-Sm complex that contains SMN1, GEMIN2/SIP1, DDX20/GEMIN3, GEMIN4, GEMIN5, GEMIN6, GEMIN7, GEMIN8, STRAP/UNRIP and the Sm proteins SNRPB, SNRPD1, SNRPD2, SNRPD3, SNRPE, SNRPF and SNRPG. Interacts with GEMIN6; the interaction is direct. Interacts with STRAP/UNRIP; the interaction is direct. Interacts with GEMIN8; the interaction is direct. Interacts with SNRPB, SNRPD2, SNRPD3 and SNRPE; the interaction is direct.

The protein resides in the nucleus. Its subcellular location is the nucleoplasm. It localises to the gem. The protein localises to the cytoplasm. The SMN complex catalyzes the assembly of small nuclear ribonucleoproteins (snRNPs), the building blocks of the spliceosome, and thereby plays an important role in the splicing of cellular pre-mRNAs. Most spliceosomal snRNPs contain a common set of Sm proteins SNRPB, SNRPD1, SNRPD2, SNRPD3, SNRPE, SNRPF and SNRPG that assemble in a heptameric protein ring on the Sm site of the small nuclear RNA to form the core snRNP (Sm core). In the cytosol, the Sm proteins SNRPD1, SNRPD2, SNRPE, SNRPF and SNRPG are trapped in an inactive 6S pICln-Sm complex by the chaperone CLNS1A that controls the assembly of the core snRNP. To assemble core snRNPs, the SMN complex accepts the trapped 5Sm proteins from CLNS1A forming an intermediate. Binding of snRNA inside 5Sm triggers eviction of the SMN complex, thereby allowing binding of SNRPD3 and SNRPB to complete assembly of the core snRNP. The polypeptide is Gem-associated protein 7 (GEMIN7) (Homo sapiens (Human)).